A 254-amino-acid chain; its full sequence is Proteasome activator complex subunit 3 (254 aa).

An N6-acetyllysine mark is found at Lys-6 and Lys-14. An N6-acetyllysine; by P300/CBP modification is found at Lys-195.

In terms of assembly, homoheptamer. Post-translationally, acetylation at the major site Lys-195 is important for oligomerization and ability to degrade its target substrates. Deacetylated by SIRT1.

Implicated in immunoproteasome assembly and required for efficient antigen processing. The PA28 activator complex enhances the generation of class I binding peptides by altering the cleavage pattern of the proteasome. This is Proteasome activator complex subunit 3 from Gallus gallus (Chicken).